We begin with the raw amino-acid sequence, 435 residues long: tRNA modification GTPase MnmE (435 aa).

(6S)-5-formyl-5,6,7,8-tetrahydrofolate is bound by residues R20, E77, and K117. In terms of domain architecture, TrmE-type G spans 214 to 359; that stretch reads GFKIVIVGAP…FMKELESFCL (146 aa). GTP contacts are provided by residues 224 to 229, 243 to 249, and 268 to 271; these read NSGKSS, TEEAGTT, and DTAG. Mg(2+) is bound by residues S228 and T249. Residue K435 participates in (6S)-5-formyl-5,6,7,8-tetrahydrofolate binding.

The protein belongs to the TRAFAC class TrmE-Era-EngA-EngB-Septin-like GTPase superfamily. TrmE GTPase family. In terms of assembly, homodimer. Heterotetramer of two MnmE and two MnmG subunits. It depends on K(+) as a cofactor.

The protein resides in the cytoplasm. Its function is as follows. Exhibits a very high intrinsic GTPase hydrolysis rate. Involved in the addition of a carboxymethylaminomethyl (cmnm) group at the wobble position (U34) of certain tRNAs, forming tRNA-cmnm(5)s(2)U34. This chain is tRNA modification GTPase MnmE, found in Bartonella henselae (strain ATCC 49882 / DSM 28221 / CCUG 30454 / Houston 1) (Rochalimaea henselae).